We begin with the raw amino-acid sequence, 462 residues long: Argininosuccinate lyase (462 aa).

The protein belongs to the lyase 1 family. Argininosuccinate lyase subfamily.

The protein localises to the cytoplasm. The enzyme catalyses 2-(N(omega)-L-arginino)succinate = fumarate + L-arginine. Its pathway is amino-acid biosynthesis; L-arginine biosynthesis; L-arginine from L-ornithine and carbamoyl phosphate: step 3/3. The chain is Argininosuccinate lyase from Bacillus cereus (strain AH820).